The primary structure comprises 837 residues: Vacuolar membrane protease (837 aa).

The Cytoplasmic portion of the chain corresponds to 1-36 (MSEEEVHDTSSEASEVFTNQPNAFVRGVRSIFGYRK). A helical membrane pass occupies residues 37–57 (TSLTLFVILTIVVTAGLSFYD). The Vacuolar portion of the chain corresponds to 58–355 (NSLELTIELP…FATPISALAR (298 aa)). The N-linked (GlcNAc...) asparagine glycan is linked to Asn-143. Residues His-157 and Asp-169 each contribute to the Zn(2+) site. Glu-201 acts as the Proton acceptor in catalysis. Zn(2+)-binding residues include Glu-202, Glu-227, and His-299. The helical transmembrane segment at 356 to 376 (VNLVLLVLFPVVSTPLLFVIV) threads the bilayer. Over 377–384 (KYKKWKLR) the chain is Cytoplasmic. The chain crosses the membrane as a helical span at residues 385-405 (VTNFLGVPLAMGLAVAVGQVG). At 406 to 415 (NPMLVSSHPM) the chain is on the vacuolar side. A helical transmembrane segment spans residues 416–436 (MVVATTTSIVVLVYYVVLNGV). The Cytoplasmic portion of the chain corresponds to 437–446 (DWVNTSSDQK). The helical transmembrane segment at 447-467 (LVTMIEVSFVYWVVLVYVTWS) threads the bilayer. The Vacuolar portion of the chain corresponds to 468 to 474 (GGDHTGE). A helical membrane pass occupies residues 475-495 (FGVTVLFFVQASTSLLGLIGW). At 496-539 (TFTRVRGGDEPLLSGEEERYGTEDERDTEKPLVEHNYDWSLQYL) the chain is on the cytoplasmic side. The chain crosses the membrane as a helical span at residues 540-560 (LIVPVSSLVVYNSGWLVLEGV). Asn-561 carries N-linked (GlcNAc...) asparagine glycosylation. Residues 561–572 (NKTVQESLASEH) are Vacuolar-facing. A helical transmembrane segment spans residues 573 to 593 (LIYWIVVVFSQFLVLPVVPFI). At 594–598 (TKFNR) the chain is on the cytoplasmic side. Residues 599-619 (YIVLGLSVVVVVGVLMSMAVH) traverse the membrane as a helical segment. At 620–837 (PFNQGSPMKL…LVGVVKHVDV (218 aa)) the chain is on the vacuolar side. An N-linked (GlcNAc...) asparagine glycan is attached at Asn-689.

It belongs to the peptidase M28 family. The cofactor is Zn(2+).

Its subcellular location is the vacuole membrane. Its function is as follows. May be involved in vacuolar sorting and osmoregulation. The chain is Vacuolar membrane protease from Candida albicans (strain SC5314 / ATCC MYA-2876) (Yeast).